Consider the following 418-residue polypeptide: Putative competence-damage inducible protein (418 aa).

Belongs to the CinA family.

This chain is Putative competence-damage inducible protein, found in Streptococcus pneumoniae (strain 70585).